The chain runs to 148 residues: MLMRTDPFRELDRFAEQVLGTSARPAVMPMDAWREGEEFVVEFDLPGIKADSLDIDIERNVVTVRAERPGVDPDREMLAAERPRGVFNRQLVLGENLDTERILASYQEGVLKLSIPVAERAKPRKISVDRGNNGHQTINKTAHEIIDA.

The sHSP domain maps to 21–131 (TSARPAVMPM…KPRKISVDRG (111 aa)).

The protein belongs to the small heat shock protein (HSP20) family.

Functionally, not known. This protein is one of the major immune reactive proteins in mycobacteria. This Mycobacterium leprae (strain TN) protein is 18 kDa antigen (hsp18).